We begin with the raw amino-acid sequence, 295 residues long: Small ribosomal subunit protein uS2 (295 aa).

It belongs to the universal ribosomal protein uS2 family. As to quaternary structure, component of the small ribosomal subunit. Mature ribosomes consist of a small (40S) and a large (60S) subunit. The 40S subunit contains about 33 different proteins and 1 molecule of RNA (18S). The 60S subunit contains about 49 different proteins and 3 molecules of RNA (25S, 5.8S and 5S). Interacts with RPS21.

It is found in the cytoplasm. Required for the assembly and/or stability of the 40S ribosomal subunit. Required for the processing of the 20S rRNA-precursor to mature 18S rRNA in a late step of the maturation of 40S ribosomal subunits. The sequence is that of Small ribosomal subunit protein uS2 from Paracoccidioides brasiliensis (strain Pb18).